The chain runs to 343 residues: Tribbles homolog 2 (343 aa).

The interval 25–50 (EELSSIRSAEPSQSFSPNLGSPSPPE) is disordered. Over residues 29-45 (SIRSAEPSQSFSPNLGS) the composition is skewed to polar residues. Residues 61–308 (IGKYLLLEPL…SQEILDHPWF (248 aa)) enclose the Protein kinase domain.

The protein belongs to the protein kinase superfamily. CAMK Ser/Thr protein kinase family. Tribbles subfamily.

The protein resides in the cytoplasm. The protein localises to the cytoskeleton. In terms of biological role, interacts with MAPK kinases and regulates activation of MAP kinases. Does not display kinase activity. The sequence is that of Tribbles homolog 2 from Mus musculus (Mouse).